We begin with the raw amino-acid sequence, 430 residues long: V-type ATP synthase beta chain 1 (430 aa).

This sequence belongs to the ATPase alpha/beta chains family.

Its function is as follows. Produces ATP from ADP in the presence of a proton gradient across the membrane. The V-type beta chain is a regulatory subunit. In Treponema pallidum (strain Nichols), this protein is V-type ATP synthase beta chain 1 (atpB1).